The chain runs to 506 residues: Maturase K (506 aa).

Belongs to the intron maturase 2 family. MatK subfamily.

Its subcellular location is the plastid. The protein localises to the chloroplast. In terms of biological role, usually encoded in the trnK tRNA gene intron. Probably assists in splicing its own and other chloroplast group II introns. This Austrosteenisia blackii (Blood vine) protein is Maturase K.